We begin with the raw amino-acid sequence, 212 residues long: uncharacterized protein (212 aa).

Residues glycine 53, glutamate 74, and aspartate 97 each contribute to the S-adenosyl-L-methionine site.

It belongs to the methyltransferase superfamily. YrrT family.

Functionally, could be a S-adenosyl-L-methionine-dependent methyltransferase. This is an uncharacterized protein from Bacillus cereus (strain ZK / E33L).